Reading from the N-terminus, the 481-residue chain is Cardiolipin synthase A (481 aa).

A run of 2 helical transmembrane segments spans residues 10-30 (FFGYLLGLIHLLGIVAALHAL) and 40-60 (IAWAMPLLFIPYLTLIPYLIF). 2 consecutive PLD phosphodiesterase domains span residues 220–247 (VNFRNHRKIVVVDGLLGFIGGHNVGDEY) and 394–421 (QPGFLHQKVVLVDDDVSAIGSANLDNRS). Catalysis depends on residues H225, K227, D232, H399, K401, and D406.

It belongs to the phospholipase D family. Cardiolipin synthase subfamily. ClsA sub-subfamily.

Its subcellular location is the cell inner membrane. The enzyme catalyses 2 a 1,2-diacyl-sn-glycero-3-phospho-(1'-sn-glycerol) = a cardiolipin + glycerol. In terms of biological role, catalyzes the reversible phosphatidyl group transfer from one phosphatidylglycerol molecule to another to form cardiolipin (CL) (diphosphatidylglycerol) and glycerol. In Pseudomonas putida (strain ATCC 47054 / DSM 6125 / CFBP 8728 / NCIMB 11950 / KT2440), this protein is Cardiolipin synthase A.